Here is a 616-residue protein sequence, read N- to C-terminus: Dihydroxy-acid dehydratase (616 aa).

A Mg(2+)-binding site is contributed by Asp-81. Residue Cys-122 coordinates [2Fe-2S] cluster. Asp-123 and Lys-124 together coordinate Mg(2+). Lys-124 is subject to N6-carboxylysine. Cys-195 contributes to the [2Fe-2S] cluster binding site. A Mg(2+)-binding site is contributed by Glu-491. The active-site Proton acceptor is Ser-517.

This sequence belongs to the IlvD/Edd family. As to quaternary structure, homodimer. The cofactor is [2Fe-2S] cluster. Mg(2+) serves as cofactor.

It catalyses the reaction (2R)-2,3-dihydroxy-3-methylbutanoate = 3-methyl-2-oxobutanoate + H2O. It carries out the reaction (2R,3R)-2,3-dihydroxy-3-methylpentanoate = (S)-3-methyl-2-oxopentanoate + H2O. The protein operates within amino-acid biosynthesis; L-isoleucine biosynthesis; L-isoleucine from 2-oxobutanoate: step 3/4. It functions in the pathway amino-acid biosynthesis; L-valine biosynthesis; L-valine from pyruvate: step 3/4. Functions in the biosynthesis of branched-chain amino acids. Catalyzes the dehydration of (2R,3R)-2,3-dihydroxy-3-methylpentanoate (2,3-dihydroxy-3-methylvalerate) into 2-oxo-3-methylpentanoate (2-oxo-3-methylvalerate) and of (2R)-2,3-dihydroxy-3-methylbutanoate (2,3-dihydroxyisovalerate) into 2-oxo-3-methylbutanoate (2-oxoisovalerate), the penultimate precursor to L-isoleucine and L-valine, respectively. This chain is Dihydroxy-acid dehydratase, found in Salmonella schwarzengrund (strain CVM19633).